An 86-amino-acid polypeptide reads, in one-letter code: Conotoxin Ec15a (86 aa).

The first 23 residues, 1 to 23 (MEKLTILILVATVLLAIQVLGQG), serve as a signal peptide directing secretion. A propeptide spanning residues 24–49 (EGEKPPKEWVQQYAAKRLWALMKGPR) is cleaved from the precursor. Residue Q50 is modified to Pyrrolidone carboxylic acid.

The protein belongs to the conotoxin O2 superfamily. Contains 4 disulfide bonds. Expressed by the venom duct.

Its subcellular location is the secreted. This Conus emaciatus (False virgin cone) protein is Conotoxin Ec15a.